The chain runs to 351 residues: Alternative oxidase, mitochondrial (351 aa).

Residues 147–167 (LTRFIFLESVAGVPGMVGGML) form a helical membrane-spanning segment. Residues glutamate 154, glutamate 193, and histidine 196 each coordinate Fe cation. Residues 212 to 232 (LMVLGAQGVFFNGFFLSYLMS) form a helical membrane-spanning segment. Residues glutamate 244, glutamate 245, glutamate 299, and histidine 302 each coordinate Fe cation. Positions 322 to 351 (AAKYKDPTKAHPNKGIADLKPTGWEREEVI) are disordered.

It belongs to the alternative oxidase family. Fe cation serves as cofactor.

It is found in the mitochondrion inner membrane. Its function is as follows. Catalyzes cyanide-resistant oxygen consumption. May increase respiration when the cytochrome respiratory pathway is restricted, or in response to low temperatures. The chain is Alternative oxidase, mitochondrial (aox1) from Aspergillus niger.